We begin with the raw amino-acid sequence, 423 residues long: Histidine--tRNA ligase (423 aa).

Belongs to the class-II aminoacyl-tRNA synthetase family. In terms of assembly, homodimer.

Its subcellular location is the cytoplasm. It carries out the reaction tRNA(His) + L-histidine + ATP = L-histidyl-tRNA(His) + AMP + diphosphate + H(+). The polypeptide is Histidine--tRNA ligase (Geobacillus sp. (strain WCH70)).